Consider the following 101-residue polypeptide: Guanyl-specific ribonuclease St (101 aa).

Cysteines 4 and 54 form a disulfide. The Proton acceptor role is filled by glutamate 61. Residue histidine 91 is the Proton donor of the active site.

Belongs to the ribonuclease N1/T1 family.

The enzyme catalyses [RNA] containing guanosine + H2O = an [RNA fragment]-3'-guanosine-3'-phosphate + a 5'-hydroxy-ribonucleotide-3'-[RNA fragment].. The polypeptide is Guanyl-specific ribonuclease St (Saccharopolyspora erythraea (Streptomyces erythraeus)).